The chain runs to 268 residues: Ubiquinone biosynthesis protein COQ4 homolog, mitochondrial (268 aa).

The transit peptide at 1-25 (MMQRCLRLQKPLALRRGLHLAQVNS) directs the protein to the mitochondrion. Zn(2+) contacts are provided by H171, D172, H175, and E187.

This sequence belongs to the COQ4 family. As to quaternary structure, component of a multi-subunit COQ enzyme complex. Zn(2+) is required as a cofactor.

Its subcellular location is the mitochondrion inner membrane. The enzyme catalyses a 4-hydroxy-3-methoxy-5-(all-trans-polyprenyl)benzoate + H(+) = a 2-methoxy-6-(all-trans-polyprenyl)phenol + CO2. The protein operates within cofactor biosynthesis; ubiquinone biosynthesis. Functionally, lyase that catalyzes the C1-decarboxylation of 4-hydroxy-3-methoxy-5-(all-trans-polyprenyl)benzoic acid into 2-methoxy-6-(all-trans-polyprenyl)phenol during ubiquinone biosynthesis. The chain is Ubiquinone biosynthesis protein COQ4 homolog, mitochondrial from Drosophila simulans (Fruit fly).